A 275-amino-acid polypeptide reads, in one-letter code: NAD(P)H-hydrate epimerase (275 aa).

One can recognise a YjeF N-terminal domain in the interval 49 to 258; it reads AIKIDQELFS…ALAAKYELNL (210 aa). (6S)-NADPHX is bound at residue 102 to 106; the sequence is NNGGD. 2 residues coordinate K(+): Asn103 and Asp167. (6S)-NADPHX contacts are provided by residues 171-177 and Asp200; that span reads GFSFKPP. Ser203 is a binding site for K(+).

This sequence belongs to the NnrE/AIBP family. K(+) is required as a cofactor.

It carries out the reaction (6R)-NADHX = (6S)-NADHX. The enzyme catalyses (6R)-NADPHX = (6S)-NADPHX. Catalyzes the epimerization of the S- and R-forms of NAD(P)HX, a damaged form of NAD(P)H that is a result of enzymatic or heat-dependent hydration. This is a prerequisite for the S-specific NAD(P)H-hydrate dehydratase to allow the repair of both epimers of NAD(P)HX. In Ixodes scapularis (Black-legged tick), this protein is NAD(P)H-hydrate epimerase.